The following is a 154-amino-acid chain: MHCPFCGAHDTKVIDSRLVAEGDQVRRRRECLACGERFTTFETAELVMPRLIKQDGSRQPFDEDKLRAGMQRALEKRPVSVERLEAAIGHIKHQLRATGEREIKSRVLGELVMAELQKLDEVAYIRFASVYRRFQDLNEFREEIERLAREPAKE.

A zinc finger lies at 3–34 (CPFCGAHDTKVIDSRLVAEGDQVRRRRECLAC). The ATP-cone domain maps to 49–139 (PRLIKQDGSR…VYRRFQDLNE (91 aa)).

It belongs to the NrdR family. Zn(2+) serves as cofactor.

Its function is as follows. Negatively regulates transcription of bacterial ribonucleotide reductase nrd genes and operons by binding to NrdR-boxes. This chain is Transcriptional repressor NrdR, found in Pseudomonas aeruginosa (strain LESB58).